Here is a 700-residue protein sequence, read N- to C-terminus: Elongation factor G (700 aa).

In terms of domain architecture, tr-type G spans 8–290 (DRYRNVGIMA…AMIMYMPSPL (283 aa)). Residues 17–24 (AHIDAGKT), 88–92 (DTPGH), and 142–145 (NKMD) contribute to the GTP site.

This sequence belongs to the TRAFAC class translation factor GTPase superfamily. Classic translation factor GTPase family. EF-G/EF-2 subfamily.

It localises to the cytoplasm. Its function is as follows. Catalyzes the GTP-dependent ribosomal translocation step during translation elongation. During this step, the ribosome changes from the pre-translocational (PRE) to the post-translocational (POST) state as the newly formed A-site-bound peptidyl-tRNA and P-site-bound deacylated tRNA move to the P and E sites, respectively. Catalyzes the coordinated movement of the two tRNA molecules, the mRNA and conformational changes in the ribosome. This chain is Elongation factor G, found in Vesicomyosocius okutanii subsp. Calyptogena okutanii (strain HA).